A 422-amino-acid polypeptide reads, in one-letter code: Elongation factor 1-alpha (422 aa).

The tr-type G domain maps to 5 to 221 (KPHMNLAVIG…NSLKEPEKPS (217 aa)). Residues 14–21 (GHIDHGKS) are G1. 14–21 (GHIDHGKS) contributes to the GTP binding site. Serine 21 serves as a coordination point for Mg(2+). Residues 70–74 (GITID) form a G2 region. A G3 region spans residues 91–94 (DCPG). Residues 91–95 (DCPGH) and 146–149 (NKMD) each bind GTP. The segment at 146–149 (NKMD) is G4. Positions 185-187 (SAF) are G5.

Belongs to the TRAFAC class translation factor GTPase superfamily. Classic translation factor GTPase family. EF-Tu/EF-1A subfamily.

It is found in the cytoplasm. It catalyses the reaction GTP + H2O = GDP + phosphate + H(+). In terms of biological role, GTP hydrolase that promotes the GTP-dependent binding of aminoacyl-tRNA to the A-site of ribosomes during protein biosynthesis. The protein is Elongation factor 1-alpha of Methanosarcina mazei (strain ATCC BAA-159 / DSM 3647 / Goe1 / Go1 / JCM 11833 / OCM 88) (Methanosarcina frisia).